The following is a 1216-amino-acid chain: Tyrosine-protein kinase receptor ver-4 (1216 aa).

At 1 to 789 (MRVSLTEFLV…VKVAGASSSS (789 aa)) the chain is on the extracellular side. N-linked (GlcNAc...) asparagine glycans are attached at residues Asn-142, Asn-195, Asn-206, Asn-245, Asn-283, Asn-333, Asn-348, Asn-384, Asn-402, Asn-412, Asn-496, Asn-508, Asn-588, Asn-599, Asn-664, and Asn-703. 2 Ig-like C2-type domains span residues 596–691 (KSVN…TSIS) and 697–783 (PPFL…VKVA). Cys-619 and Cys-675 are oxidised to a cystine. An intrachain disulfide couples Cys-721 to Cys-765. The chain crosses the membrane as a helical span at residues 790–810 (FFWLFITFFAFVVVGIVVSLL). The Cytoplasmic portion of the chain corresponds to 811 to 1216 (WKLFGQKDLK…WVQKPTQLFF (406 aa)). Residues 870-1181 (LEILETLGSG…IKLFKNHIQY (312 aa)) form the Protein kinase domain. Residues 876 to 884 (LGSGQFGIV) and Lys-908 contribute to the ATP site. Catalysis depends on Asp-1042, which acts as the Proton acceptor.

It belongs to the protein kinase superfamily. Tyr protein kinase family.

Its subcellular location is the cell membrane. The enzyme catalyses L-tyrosyl-[protein] + ATP = O-phospho-L-tyrosyl-[protein] + ADP + H(+). Functionally, receptor tyrosine kinase which may be involved, downstream of pvf-1, in the positioning of ray 1, the most anterior ray sensillum in the male tail. The polypeptide is Tyrosine-protein kinase receptor ver-4 (Caenorhabditis elegans).